A 407-amino-acid chain; its full sequence is Argininosuccinate synthase (407 aa).

ATP contacts are provided by residues 12–20 and Ala-39; that span reads AYSGGLDTS. L-citrulline is bound by residues Tyr-92 and Ser-97. Gly-122 serves as a coordination point for ATP. L-aspartate contacts are provided by Thr-124, Asn-128, and Asp-129. Residue Asn-128 participates in L-citrulline binding. Positions 132, 182, 191, 267, and 279 each coordinate L-citrulline.

Belongs to the argininosuccinate synthase family. Type 1 subfamily. Homotetramer.

Its subcellular location is the cytoplasm. The catalysed reaction is L-citrulline + L-aspartate + ATP = 2-(N(omega)-L-arginino)succinate + AMP + diphosphate + H(+). Its pathway is amino-acid biosynthesis; L-arginine biosynthesis; L-arginine from L-ornithine and carbamoyl phosphate: step 2/3. The sequence is that of Argininosuccinate synthase from Campylobacter fetus subsp. fetus (strain 82-40).